Consider the following 451-residue polypeptide: Glyceraldehyde-3-phosphate dehydrogenase B, chloroplastic (451 aa).

A disordered region spans residues 1-25; sequence MATHAALASTRIPTNTRFPSKTSHS. A chloroplast-targeting transit peptide spans 1–84; it reads MATHAALAST…STAVKGVTVA (84 aa). The span at 11–25 shows a compositional bias: polar residues; that stretch reads RIPTNTRFPSKTSHS. NADP(+)-binding positions include 95 to 96, Asp-119, and Arg-164; that span reads RI. D-glyceraldehyde 3-phosphate-binding positions include 238–240, Thr-269, Arg-284, 297–298, and Arg-320; these read SCT and TG. Cys-239 functions as the Nucleophile in the catalytic mechanism. Asn-403 contacts NADP(+).

This sequence belongs to the glyceraldehyde-3-phosphate dehydrogenase family. As to quaternary structure, tetramer of either four A chains (GAPDH 2) or two A and two B chains (GAPDH 1).

It is found in the plastid. The protein localises to the chloroplast. It carries out the reaction D-glyceraldehyde 3-phosphate + phosphate + NADP(+) = (2R)-3-phospho-glyceroyl phosphate + NADPH + H(+). The protein operates within carbohydrate biosynthesis; Calvin cycle. The polypeptide is Glyceraldehyde-3-phosphate dehydrogenase B, chloroplastic (GAPB) (Pisum sativum (Garden pea)).